Consider the following 549-residue polypeptide: Oxygen-dependent choline dehydrogenase (549 aa).

4 to 33 (DFVIIGSGSAGSALAYRLSEDGKNSVLVIE) is a binding site for FAD. Residue His465 is the Proton acceptor of the active site. The tract at residues 530-549 (PLARSNQEPWINPRAAVSDR) is disordered.

This sequence belongs to the GMC oxidoreductase family. Requires FAD as cofactor.

It carries out the reaction choline + A = betaine aldehyde + AH2. The enzyme catalyses betaine aldehyde + NAD(+) + H2O = glycine betaine + NADH + 2 H(+). It participates in amine and polyamine biosynthesis; betaine biosynthesis via choline pathway; betaine aldehyde from choline (cytochrome c reductase route): step 1/1. Involved in the biosynthesis of the osmoprotectant glycine betaine. Catalyzes the oxidation of choline to betaine aldehyde and betaine aldehyde to glycine betaine at the same rate. The sequence is that of Oxygen-dependent choline dehydrogenase from Rhizobium etli (strain ATCC 51251 / DSM 11541 / JCM 21823 / NBRC 15573 / CFN 42).